An 809-amino-acid chain; its full sequence is 3',5'-cyclic-AMP phosphodiesterase 4D (809 aa).

The interval 1–107 (MEAEGSSAPA…SGATGRVRHR (107 aa)) is disordered. 3 positions are modified to phosphoserine: His-54, Pro-59, and Pro-63. Positions 58-89 (PPPPPPSPQPQPQCPLQPPPPPPLPPPPPPPG) are enriched in pro residues. Low complexity predominate over residues 90–102 (AARGRYASSGATG). Phosphoserine is present on residues Ser-142, Ser-299, Ser-301, Ser-348, and Ser-375. Residues 343–364 (EVEIPSPTQKEKEKKKRPMSQI) form a disordered region. The PDEase domain occupies 386–715 (VKTEQEDVLA…EWYQSTIPQS (330 aa)). Lys-387 participates in a covalent cross-link: Glycyl lysine isopeptide (Lys-Gly) (interchain with G-Cter in SUMO). The Proton donor role is filled by His-462. A 3',5'-cyclic AMP-binding site is contributed by His-462. His-462 provides a ligand contact to AMP. Zn(2+)-binding residues include His-466, His-502, Asp-503, and Asp-620. Positions 503, 620, 623, 671, and 674 each coordinate AMP. Asp-503 serves as a coordination point for Mg(2+). Residue Asp-503 coordinates Mn(2+). 3',5'-cyclic AMP contacts are provided by Gln-671 and Phe-674. Disordered stretches follow at residues 710–729 (STIP…GRQG) and 739–809 (TLEE…SPDT). Over residues 762 to 773 (CSDSKTLCTQDS) the composition is skewed to polar residues. The segment covering 779–796 (PLDEQVEEEAVGEEEESQ) has biased composition (acidic residues).

It belongs to the cyclic nucleotide phosphodiesterase family. PDE4 subfamily. Homodimer for the long isoforms. Isoforms with truncated N-termini are monomeric. Isoform 3 is part of a ternary complex containing PRKAR2A, PRKAR2B and AKAP9. Interacts with PDE4DIP. Identified in a complex composed of RYR1, PDE4D, PKA, FKBP1A and protein phosphatase 1 (PP1). Isoform 5, isoform N3 and isoform 12 bind RACK1 via their unique N-terminus. Binds ARRB2. Interacts (via N-terminal region) with SHANK2 (via proline-rich region); the interaction is increased in a PKA-dependent manner. It depends on Zn(2+) as a cofactor. Mg(2+) serves as cofactor. Mn(2+) is required as a cofactor. Long isoforms that share a conserved PKA phosphorylation site in the N-terminus are activated by PKA through phosphorylation. Isoform 3 and isoform 7 are activated by phosphorylation (in vitro), but not isoform 6. Isoform N3 and isoform 12 are phosphorylated on Ser-49, Ser-51, Ser-55 and Ser-59. In terms of processing, sumoylation of long isoforms by PIAS4 augments their activation by PKA phosphorylation and represses their inhibition by ERK phosphorylation. As to expression, expressed in colonic epithelial cells (at protein level). Widespread; most abundant in skeletal muscle. In terms of tissue distribution, detected in brain. Detected in brain, placenta, lung and kidney. As to expression, detected in heart and skeletal muscle.

It is found in the apical cell membrane. The protein resides in the cytoplasm. It localises to the membrane. The protein localises to the cytoskeleton. Its subcellular location is the microtubule organizing center. It is found in the centrosome. It catalyses the reaction 3',5'-cyclic AMP + H2O = AMP + H(+). It participates in purine metabolism; 3',5'-cyclic AMP degradation; AMP from 3',5'-cyclic AMP: step 1/1. Inhibited by rolipram. Activated by phosphatidic acid. Hydrolyzes the second messenger cAMP, which is a key regulator of many important physiological processes. The chain is 3',5'-cyclic-AMP phosphodiesterase 4D from Homo sapiens (Human).